A 449-amino-acid chain; its full sequence is Glutamyl-tRNA reductase (449 aa).

Substrate contacts are provided by residues 58-61 (TCNR), serine 121, 126-128 (ETQ), and glutamine 132. Cysteine 59 functions as the Nucleophile in the catalytic mechanism. Residue 203–208 (GLGEMA) coordinates NADP(+).

This sequence belongs to the glutamyl-tRNA reductase family. In terms of assembly, homodimer.

It catalyses the reaction (S)-4-amino-5-oxopentanoate + tRNA(Glu) + NADP(+) = L-glutamyl-tRNA(Glu) + NADPH + H(+). The protein operates within porphyrin-containing compound metabolism; protoporphyrin-IX biosynthesis; 5-aminolevulinate from L-glutamyl-tRNA(Glu): step 1/2. In terms of biological role, catalyzes the NADPH-dependent reduction of glutamyl-tRNA(Glu) to glutamate 1-semialdehyde (GSA). This chain is Glutamyl-tRNA reductase, found in Helicobacter pylori (strain ATCC 700392 / 26695) (Campylobacter pylori).